A 335-amino-acid chain; its full sequence is uncharacterized protein (335 aa).

Glycine 28–threonine 35 lines the ATP pocket.

Belongs to the archaeal ATPase family.

This is an uncharacterized protein from Pyrococcus abyssi (strain GE5 / Orsay).